The sequence spans 142 residues: Hemoglobin subunit alpha (142 aa).

The Globin domain maps to 2–142; sequence VLSPTDKSNV…VSTVLTSKYR (141 aa). Position 4 is a phosphoserine (Ser4). N6-succinyllysine occurs at positions 8 and 12. The residue at position 17 (Lys17) is an N6-acetyllysine; alternate. N6-succinyllysine; alternate is present on Lys17. Tyr25 bears the Phosphotyrosine mark. Lys41 is subject to N6-succinyllysine. His59 is an O2 binding site. A heme b-binding site is contributed by His88. A Phosphoserine modification is found at Ser103. At Thr109 the chain carries Phosphothreonine. 2 positions are modified to phosphoserine: Ser125 and Ser132. Residues Thr135 and Thr138 each carry the phosphothreonine modification. At Ser139 the chain carries Phosphoserine.

The protein belongs to the globin family. As to quaternary structure, heterotetramer of two alpha chains and two beta chains. Red blood cells.

Involved in oxygen transport from the lung to the various peripheral tissues. In terms of biological role, hemopressin acts as an antagonist peptide of the cannabinoid receptor CNR1. Hemopressin-binding efficiently blocks cannabinoid receptor CNR1 and subsequent signaling. The sequence is that of Hemoglobin subunit alpha (HBA) from Balaenoptera acutorostrata (Common minke whale).